The following is a 490-amino-acid chain: MAQRAVWLISHEPGTPLCGTVRFSRRYPTVEKRARVFNGASYVPIPEDGPFLKALLFELRLLDDDKDFVESRDSCSRINKTSIYGLLIGGEELWPVVAFLKNDIIYACVPLVEQTLSPRPPLISVSGVSQGFEFLFGIQDFLYSGQKNDSELNTKLSQLPDLLLQACPFGTLLDANLKNSLDNTNFASVTQPQKQPAWKTGTYKGKPQVSISITEKVKSMQYDKQGIADTWQVVGTVTCKCDLEGIMPNVTISLNLPTNGSPLQDILVHPCVTSLDSAILTSSSIDAMDDSAFSGPYKFPLTPPLESFNLCYYTSQVPVPPILGFYQLKEEEVQLRITINLKLHESVKNNFEFCEAHIPFYNRGPITHLEYKTSFGQLEVFREKSLLIWIIGQKFPKSMEISLSGTVTFGAKSHEKQPFDPICIGETAYLKLHFRILDYTLTGCYADQHSVQVFASGKPKISAYRKLISSDYYIWNSKAPAPVTYGSLLL.

In terms of domain architecture, MHD spans 206-476; the sequence is KPQVSISITE…LISSDYYIWN (271 aa).

The protein belongs to the adaptor complexes medium subunit family. As to quaternary structure, probably part of the adaptor protein complex 5 (AP-5) a tetramer composed of AP5B1, AP5M1, AP5S1 and AP5Z1.

The protein resides in the cytoplasm. Its subcellular location is the cytosol. The protein localises to the late endosome membrane. It localises to the lysosome membrane. Its function is as follows. As part of AP-5, a probable fifth adaptor protein complex it may be involved in endosomal transport. The polypeptide is AP-5 complex subunit mu-1 (AP5M1) (Macaca fascicularis (Crab-eating macaque)).